We begin with the raw amino-acid sequence, 588 residues long: Aspartate--tRNA ligase (588 aa).

L-aspartate is bound at residue Glu-171. The aspartate stretch occupies residues Gln-195–Lys-198. Arg-217 is an L-aspartate binding site. Residues Arg-217–Glu-219 and Gln-226 contribute to the ATP site. Residue His-447 coordinates L-aspartate. Glu-481 contacts ATP. Arg-488 serves as a coordination point for L-aspartate. Gly-533–Arg-536 contacts ATP.

The protein belongs to the class-II aminoacyl-tRNA synthetase family. Type 1 subfamily. As to quaternary structure, homodimer.

The protein resides in the cytoplasm. The enzyme catalyses tRNA(Asp) + L-aspartate + ATP = L-aspartyl-tRNA(Asp) + AMP + diphosphate. In terms of biological role, catalyzes the attachment of L-aspartate to tRNA(Asp) in a two-step reaction: L-aspartate is first activated by ATP to form Asp-AMP and then transferred to the acceptor end of tRNA(Asp). The sequence is that of Aspartate--tRNA ligase from Aeromonas salmonicida (strain A449).